We begin with the raw amino-acid sequence, 67 residues long: Probable archaeal histone 3 (67 aa).

Interaction with DNA stretches follow at residues 20-22 (RVS) and 54-57 (KTVK).

It belongs to the archaeal histone HMF family. In terms of assembly, homodimer or heterodimer with another histone. Dimers then assemble into higher oligomers, with the DNA wrapped around the protein core.

It localises to the cytoplasm. It is found in the chromosome. In terms of biological role, binds and compact DNA (95 to 150 base pairs) to form nucleosome-like structures that contain positive DNA supercoils. Increases the resistance of DNA to thermal denaturation (in vitro). This chain is Probable archaeal histone 3, found in Methanocaldococcus jannaschii (strain ATCC 43067 / DSM 2661 / JAL-1 / JCM 10045 / NBRC 100440) (Methanococcus jannaschii).